Reading from the N-terminus, the 450-residue chain is Phosphoglucosamine mutase (450 aa).

Residue Ser-101 is the Phosphoserine intermediate of the active site. Mg(2+)-binding residues include Ser-101, Asp-240, Asp-242, and Asp-244. Ser-101 carries the phosphoserine modification.

The protein belongs to the phosphohexose mutase family. The cofactor is Mg(2+). Activated by phosphorylation.

The catalysed reaction is alpha-D-glucosamine 1-phosphate = D-glucosamine 6-phosphate. In terms of biological role, catalyzes the conversion of glucosamine-6-phosphate to glucosamine-1-phosphate. This chain is Phosphoglucosamine mutase, found in Streptococcus equi subsp. zooepidemicus (strain H70).